The chain runs to 113 residues: UPF0342 protein SEQ_0993 (113 aa).

Belongs to the UPF0342 family.

The protein is UPF0342 protein SEQ_0993 of Streptococcus equi subsp. equi (strain 4047).